Here is a 192-residue protein sequence, read N- to C-terminus: dTTP/UTP pyrophosphatase (192 aa).

Residue Asp-70 is the Proton acceptor of the active site.

Belongs to the Maf family. YhdE subfamily. Requires a divalent metal cation as cofactor.

The protein resides in the cytoplasm. The catalysed reaction is dTTP + H2O = dTMP + diphosphate + H(+). The enzyme catalyses UTP + H2O = UMP + diphosphate + H(+). Functionally, nucleoside triphosphate pyrophosphatase that hydrolyzes dTTP and UTP. May have a dual role in cell division arrest and in preventing the incorporation of modified nucleotides into cellular nucleic acids. The sequence is that of dTTP/UTP pyrophosphatase from Clostridium perfringens (strain SM101 / Type A).